The sequence spans 186 residues: MSEPASISTGVAARYATAVYDIAKDSKSVKTLEDDINVLQGALAESADFGALIMSPIYTREEQEAAISALAAKMGLSATMANTLSLMAQKRRLFVVPQLLSTLREIIAEDKGEVTADVVSAKALTKTQADKLAKTLKASTGKTVTLNASVDESLIGGLVVKVGSRMIDTSIRSKLNSLQNAMKEVG.

This sequence belongs to the ATPase delta chain family. In terms of assembly, F-type ATPases have 2 components, F(1) - the catalytic core - and F(0) - the membrane proton channel. F(1) has five subunits: alpha(3), beta(3), gamma(1), delta(1), epsilon(1). CF(0) has four main subunits: a(1), b(1), b'(1) and c(10-14). The alpha and beta chains form an alternating ring which encloses part of the gamma chain. F(1) is attached to F(0) by a central stalk formed by the gamma and epsilon chains, while a peripheral stalk is formed by the delta, b and b' chains.

It is found in the cell inner membrane. In terms of biological role, f(1)F(0) ATP synthase produces ATP from ADP in the presence of a proton or sodium gradient. F-type ATPases consist of two structural domains, F(1) containing the extramembraneous catalytic core and F(0) containing the membrane proton channel, linked together by a central stalk and a peripheral stalk. During catalysis, ATP synthesis in the catalytic domain of F(1) is coupled via a rotary mechanism of the central stalk subunits to proton translocation. This protein is part of the stalk that links CF(0) to CF(1). It either transmits conformational changes from CF(0) to CF(1) or is implicated in proton conduction. The sequence is that of ATP synthase subunit delta from Roseobacter denitrificans (strain ATCC 33942 / OCh 114) (Erythrobacter sp. (strain OCh 114)).